Reading from the N-terminus, the 484-residue chain is MGSNDLINEAYDDSEVVGEERESKSAWMKRWYQLLTSPLDLQLVINEKLEMINWDAYAKSLAKPLGNFLTILFFIIRLLQDNLIKPNYYKLNVKSGAFDLSKSNKLKEFDYLWEISSSFQNSNQFYAFQSWYFVTLRFLNNLFRFTIFILLSLNLYVSCKFMFGYFKTYNLFHLKKEFNSPNLTKHNLKDLSKEYYEDIYKQSLWSMLKHFFRGSRDDGPHVNQNEVEIFFQLRKWIPTNFMINLFVSFSPTAIVFLSFSDVSFTSAIAIVFHQYILDYIITKRFQRSVDDDLILSSAALQEYEDKHIMARINQCSNIDTLSSAMGTRSKTPRIFTTHSLCGEEIREVYNYEKREFEALPKMTESVPGSRETRIKDYGGISQVSDNQSHPIGFHYSPRMSPYYRDKVLDNNLAQSSSNENLEKGGAFLPNQDQNRPSKSLSPLRKTPLSARQKRFEGSEFNVLNKNDINSILRSPKKKKNYHKR.

Position 3 is a phosphoserine (serine 3). 2 helical membrane-spanning segments follow: residues phenylalanine 145 to tyrosine 165 and threonine 252 to phenylalanine 272. The interval serine 416–serine 458 is disordered. A Phosphoserine modification is found at serine 417. The segment covering asparagine 430 to leucine 440 has biased composition (polar residues). Serine 474 bears the Phosphoserine mark.

Belongs to the NUR1 family. As to quaternary structure, interacts with CSM1.

The protein localises to the nucleus membrane. In terms of biological role, member of a perinuclear network that controls recombination at multiple loci to maintain genome stability. Required for rDNA repeat stability. The protein is Nuclear rim protein 1 (NUR1) of Saccharomyces cerevisiae (strain YJM789) (Baker's yeast).